We begin with the raw amino-acid sequence, 332 residues long: Formamidase (332 aa).

A CN hydrolase domain is found at 14–259 (FLTALIQYPV…WEIVTAEVYP (246 aa)). Glu60 (proton acceptor) is an active-site residue. Catalysis depends on Lys132, which acts as the Proton donor. Cys165 serves as the catalytic Nucleophile.

It belongs to the carbon-nitrogen hydrolase superfamily. Aliphatic amidase family.

It catalyses the reaction formamide + H2O = formate + NH4(+). Is an aliphatic amidase with a restricted substrate specificity, as it only hydrolyzes formamide. The polypeptide is Formamidase (Bacillus cereus (strain B4264)).